The primary structure comprises 745 residues: Copper-transporting ATPase (745 aa).

In terms of domain architecture, HMA spans 1-67; it reads MKESFYIEGM…LIEKLGYSPK (67 aa). Topologically, residues 1 to 83 are cytoplasmic; the sequence is MKESFYIEGM…KKEFFSPNVK (83 aa). The Cu cation site is built by Cys12 and Cys15. Residues 84 to 104 traverse the membrane as a helical segment; it reads LALAVIFTLFVVYLSMGAMLS. Over 105 to 124 the chain is Extracellular; the sequence is PSLLPESLLAINNHSNFLNA. Residues 125–144 form a helical membrane-spanning segment; the sequence is CLQLIGALIVMHLGRDFYIQ. The Cytoplasmic segment spans residues 145–151; that stretch reads GFKALWH. A helical membrane pass occupies residues 152–172; sequence RQPNMSSLIAIGTSAALISSL. Topologically, residues 173-194 are extracellular; sequence WQLYLVYTNHYTDQWSYGHYYF. Residues 195-215 form a helical membrane-spanning segment; that stretch reads ESVCVILMFVMVGKRIENVSK. Topologically, residues 216–343 are cytoplasmic; that stretch reads DKALDAMQAL…KAEISRLADK (128 aa). The helical transmembrane segment at 344–366 threads the bilayer; it reads VSSVFVPSVIAIAILAFVVWLII. Topologically, residues 367–379 are extracellular; sequence APKPDFWWNFGIA. Residues 380 to 397 form a helical membrane-spanning segment; sequence LEVFVSVLVISCPCALGL. Residues 398 to 685 are Cytoplasmic-facing; it reads ATPMSILVAN…KLSQATIKNI (288 aa). The active-site 4-aspartylphosphate intermediate is the Asp435. 2 residues coordinate Mg(2+): Asp631 and Asp635. Residues 686-705 form a helical membrane-spanning segment; the sequence is KENLFWAFCYNSVFIPLACG. Over 706-716 the chain is Extracellular; that stretch reads VLYKANIMLSP. Residues 717–735 form a helical membrane-spanning segment; the sequence is AIAGLAMSLSSVSVVLNSQ. Topologically, residues 736 to 745 are cytoplasmic; it reads RLRNFKIKDH.

Belongs to the cation transport ATPase (P-type) (TC 3.A.3) family. Type IB subfamily.

The protein localises to the cell membrane. It carries out the reaction Cu(2+)(in) + ATP + H2O = Cu(2+)(out) + ADP + phosphate + H(+). Functionally, probably involved in copper export. The sequence is that of Copper-transporting ATPase (copA) from Helicobacter pylori (Campylobacter pylori).